Consider the following 449-residue polypeptide: 5'-deoxyadenosine deaminase (449 aa).

Positions 79 and 81 each coordinate Zn(2+). Glutamate 108 and histidine 200 together coordinate substrate. Residue histidine 227 coordinates Zn(2+). 2 residues coordinate substrate: glutamate 230 and aspartate 316. Zn(2+) is bound at residue aspartate 316.

It belongs to the metallo-dependent hydrolases superfamily. MTA/SAH deaminase family. In terms of assembly, homotetramer. Zn(2+) serves as cofactor.

It carries out the reaction 5'-deoxyadenosine + H2O + H(+) = 5'-deoxyinosine + NH4(+). The enzyme catalyses S-adenosyl-L-homocysteine + H2O + H(+) = S-inosyl-L-homocysteine + NH4(+). The catalysed reaction is S-methyl-5'-thioadenosine + H2O + H(+) = S-methyl-5'-thioinosine + NH4(+). It catalyses the reaction adenosine + H2O + H(+) = inosine + NH4(+). It participates in amino-acid biosynthesis; S-adenosyl-L-methionine biosynthesis. Its function is as follows. Catalyzes the deamination of three SAM-derived enzymatic products, namely 5'-deoxyadenosine, S-adenosyl-L-homocysteine, and 5'-methylthioadenosine, to produce the inosine analogs. Can also deaminate adenosine. The preferred substrate for this enzyme is 5'-deoxyadenosine, but all these substrates are efficiently deaminated. Likely functions in a S-adenosyl-L-methionine (SAM) recycling pathway from S-adenosyl-L-homocysteine (SAH) produced from SAM-dependent methylation reactions. May also be involved in the recycling of 5'-deoxyadenosine, whereupon the 5'-deoxyribose moiety of 5'-deoxyinosine is further metabolized to deoxyhexoses used for the biosynthesis of aromatic amino acids in methanogens. The chain is 5'-deoxyadenosine deaminase from Methanospirillum hungatei JF-1 (strain ATCC 27890 / DSM 864 / NBRC 100397 / JF-1).